The primary structure comprises 142 residues: Hemoglobin subunit alpha (142 aa).

The region spanning 2 to 142 is the Globin domain; it reads VLSPADKTNV…VSTVLVSKYR (141 aa). Ser4 bears the Phosphoserine mark. Lys8 carries the post-translational modification N6-succinyllysine. Thr9 carries the post-translational modification Phosphothreonine. Residue Lys12 is modified to N6-succinyllysine. At Lys17 the chain carries N6-acetyllysine; alternate. An N6-succinyllysine; alternate modification is found at Lys17. Residue Tyr25 is modified to Phosphotyrosine. Position 36 is a phosphoserine (Ser36). Lys41 bears the N6-succinyllysine mark. Ser50 is modified (phosphoserine). His59 serves as a coordination point for O2. Residue His88 coordinates heme b. At Ser103 the chain carries Phosphoserine. Phosphothreonine is present on Thr109. A phosphoserine mark is found at Ser125 and Ser132. Residue Thr135 is modified to Phosphothreonine. Phosphoserine is present on Ser139.

The protein belongs to the globin family. In terms of assembly, heterotetramer of two alpha chains and two beta chains. In terms of tissue distribution, red blood cells.

Its function is as follows. Involved in oxygen transport from the lung to the various peripheral tissues. In terms of biological role, hemopressin acts as an antagonist peptide of the cannabinoid receptor CNR1. Hemopressin-binding efficiently blocks cannabinoid receptor CNR1 and subsequent signaling. The chain is Hemoglobin subunit alpha (HBA) from Antrozous pallidus (Pallid bat).